The following is a 169-amino-acid chain: Ribosome maturation factor RimM (169 aa).

The region spanning Glu-97 to Tyr-169 is the PRC barrel domain.

Belongs to the RimM family. As to quaternary structure, binds ribosomal protein uS19.

Its subcellular location is the cytoplasm. Its function is as follows. An accessory protein needed during the final step in the assembly of 30S ribosomal subunit, possibly for assembly of the head region. Essential for efficient processing of 16S rRNA. May be needed both before and after RbfA during the maturation of 16S rRNA. It has affinity for free ribosomal 30S subunits but not for 70S ribosomes. The polypeptide is Ribosome maturation factor RimM (Francisella tularensis subsp. tularensis (strain WY96-3418)).